Here is a 316-residue protein sequence, read N- to C-terminus: Probable 5-dehydro-4-deoxyglucarate dehydratase (316 aa).

The protein belongs to the DapA family.

It catalyses the reaction 5-dehydro-4-deoxy-D-glucarate + H(+) = 2,5-dioxopentanoate + CO2 + H2O. The protein operates within carbohydrate acid metabolism; D-glucarate degradation; 2,5-dioxopentanoate from D-glucarate: step 2/2. This Corynebacterium glutamicum (strain R) protein is Probable 5-dehydro-4-deoxyglucarate dehydratase.